Consider the following 269-residue polypeptide: MEMO1 family protein TV1383 (269 aa).

Belongs to the MEMO1 family.

In Thermoplasma volcanium (strain ATCC 51530 / DSM 4299 / JCM 9571 / NBRC 15438 / GSS1), this protein is MEMO1 family protein TV1383.